A 138-amino-acid chain; its full sequence is Large ribosomal subunit protein bL17 (138 aa).

The protein belongs to the bacterial ribosomal protein bL17 family. As to quaternary structure, part of the 50S ribosomal subunit. Contacts protein L32.

The polypeptide is Large ribosomal subunit protein bL17 (Dinoroseobacter shibae (strain DSM 16493 / NCIMB 14021 / DFL 12)).